Here is a 335-residue protein sequence, read N- to C-terminus: GTPase Obg (335 aa).

Residues 1-158 (MFVDQITLEL…RLVELELKLI (158 aa)) enclose the Obg domain. The 176-residue stretch at 159 to 334 (ADIGLVGFPN…LHDLFKSKLS (176 aa)) folds into the OBG-type G domain. Residues 165 to 172 (GFPNAGKS), 190 to 194 (FTTLH), 215 to 218 (DIPG), 285 to 288 (NKID), and 315 to 317 (SGL) contribute to the GTP site. 2 residues coordinate Mg(2+): S172 and T192.

Belongs to the TRAFAC class OBG-HflX-like GTPase superfamily. OBG GTPase family. As to quaternary structure, monomer. Requires Mg(2+) as cofactor.

Its subcellular location is the cytoplasm. An essential GTPase which binds GTP, GDP and possibly (p)ppGpp with moderate affinity, with high nucleotide exchange rates and a fairly low GTP hydrolysis rate. Plays a role in control of the cell cycle, stress response, ribosome biogenesis and in those bacteria that undergo differentiation, in morphogenesis control. The protein is GTPase Obg of Chlamydia muridarum (strain MoPn / Nigg).